Here is a 148-residue protein sequence, read N- to C-terminus: Large ribosomal subunit protein bL9 (148 aa).

In terms of assembly, part of the 50S ribosomal subunit.

In terms of biological role, binds to the 23S rRNA. Extends more that 50 Angstroms beyond the surface of the 70S ribosome. In Thermus thermophilus (strain ATCC 27634 / DSM 579 / HB8), this protein is Large ribosomal subunit protein bL9 (rplI).